The primary structure comprises 417 residues: MPLYEGLGSGGEKTAVVIDLGEAFTKCGFAGETGPRCIIPSVIKRAGMPKPVRVVQYNINTEELYSYLKEFIHILYFRHLLVNPRDRRVVIIESVLCPSHFRETLTRVLFKYFEVPSVLLAPSHLMALLTLGINSAMVLDCGYRESLVLPIYEGIPVLNCWGALPLGGKALHKELETQLLEQCTVDTSVAKEQSLPSVMGSVPEGVLEDIKARTCFVSDLKRGLKIQAAKFNIDGNNERPSPPPNVDYPLDGEKILHILGSIRDSVVEILFEQDNEEQSVATLILDSLIQCPIDTRKQLAENLVVIGGTSMLPGFLHRLLAEIRYLVEKPKYKKALGTKTFRIHTPPAKANCVAWLGGAIFGALQDILGSRSVSKEYYNQTGRIPDWCSLNNPPLEMMFDVGKTQPPLMKRAFSTEK.

The protein belongs to the actin family. In terms of assembly, subunit of dynactin, a multiprotein complex part of a tripartite complex with dynein and a adapter, such as BICDL1, BICD2 or HOOK3. The dynactin complex is built around ACTR1A/ACTB filament and consists of an actin-related filament composed of a shoulder domain, a pointed end and a barbed end. Its length is defined by its flexible shoulder domain. The soulder is composed of 2 DCTN1 subunits, 4 DCTN2 and 2 DCTN3. The 4 DCNT2 (via N-terminus) bind the ACTR1A filament and act as molecular rulers to determine the length. The pointed end is important for binding dynein-dynactin cargo adapters. Consists of 4 subunits: ACTR10, DCNT4, DCTN5 and DCTN6. The barbed end is composed of a CAPZA1:CAPZB heterodimers, which binds ACTR1A/ACTB filament and dynactin and stabilizes dynactin.

The protein localises to the cytoplasm. The protein resides in the cytoskeleton. In terms of biological role, part of the dynactin complex that activates the molecular motor dynein for ultra-processive transport along microtubules. The chain is Actin-related protein 10 (ACTR10) from Homo sapiens (Human).